The primary structure comprises 1939 residues: Myosin-1 (1939 aa).

One can recognise a Myosin N-terminal SH3-like domain in the interval 33–82; that stretch reads DAKTSVFVAEPKESFVKGTVQSREGGKVTVKTEAGATLTVKEDQVFPMNP. 2 positions are modified to phosphothreonine: Thr-64 and Thr-69. The Myosin motor domain maps to 86–782; it reads DKIEDMAMMT…LLGLLEEMRD (697 aa). Lys-130 carries the post-translational modification N6,N6,N6-trimethyllysine. Residue 179–186 participates in ATP binding; sequence GESGAGKT. Residue Tyr-389 is modified to Phosphotyrosine. Thr-419 carries the post-translational modification Phosphothreonine. A Phosphotyrosine modification is found at Tyr-424. The segment at 659-681 is actin-binding; the sequence is LNKLMTNLRSTHPHFVRCIIPNE. The residue at position 757 (His-757) is a Pros-methylhistidine. The actin-binding stretch occupies residues 761 to 775; the sequence is KFGHTKVFFKAGLLG. The IQ domain occupies 785-814; the sequence is LAQLITRTQARCRGFLARVEYQKMVERRES. Residues 843 to 1939 adopt a coiled-coil conformation; the sequence is LLKSAETEKE…EVHTKIISEE (1097 aa). 2 positions are modified to phosphoserine: Ser-1092 and Ser-1096. Disordered stretches follow at residues 1125 to 1147 and 1153 to 1172; these read EIEAERASRAKAEKQRSDLSREL and RLEEAGGATSAQIEMNKKRE. Positions 1128 to 1147 are enriched in basic and acidic residues; that stretch reads AERASRAKAEKQRSDLSREL. A phosphoserine mark is found at Ser-1162 and Ser-1237. Thr-1241 is modified (phosphothreonine). A Phosphoserine modification is found at Ser-1243. At Thr-1255 the chain carries Phosphothreonine. Ser-1261 is subject to Phosphoserine. Phosphothreonine is present on residues Thr-1265 and Thr-1286. Ser-1288, Ser-1292, Ser-1303, and Ser-1306 each carry phosphoserine. Tyr-1464 is modified (phosphotyrosine). At Thr-1467 the chain carries Phosphothreonine. A Phosphoserine modification is found at Ser-1474. Tyr-1492 is modified (phosphotyrosine). Position 1495 is a phosphoserine (Ser-1495). Thr-1501 carries the post-translational modification Phosphothreonine. Ser-1514 is subject to Phosphoserine. The residue at position 1517 (Thr-1517) is a Phosphothreonine. Phosphoserine occurs at positions 1542, 1554, 1574, 1600, 1603, 1714, and 1726. Residues Thr-1730 and Thr-1736 each carry the phosphothreonine modification. The residue at position 1739 (Ser-1739) is a Phosphoserine.

The protein belongs to the TRAFAC class myosin-kinesin ATPase superfamily. Myosin family. Muscle myosin is a hexameric protein that consists of 2 heavy chain subunits (MHC), 2 alkali light chain subunits (MLC) and 2 regulatory light chain subunits (MLC-2). Interacts with SLC26A5.

Its subcellular location is the cytoplasm. It localises to the myofibril. Functionally, required for normal hearing. It plays a role in cochlear amplification of auditory stimuli, likely through the positive regulation of prestin (SLC26A5) activity and outer hair cell (OHC) electromotility. This chain is Myosin-1 (MYH1), found in Sus scrofa (Pig).